We begin with the raw amino-acid sequence, 21 residues long: Fibrinogen beta chain (21 aa).

Pyrrolidone carboxylic acid is present on glutamine 1. Over residues 1 to 11 (QFPTDYDEGED) the composition is skewed to acidic residues. The segment at 1–21 (QFPTDYDEGEDDRPKSGLGAR) is disordered. O-linked (GalNAc...) threonine glycosylation is present at threonine 4. A Sulfotyrosine modification is found at tyrosine 6.

In terms of assembly, heterohexamer; disulfide linked. Contains 2 sets of 3 non-identical chains (alpha, beta and gamma). The 2 heterotrimers are in head to head conformation with the N-termini in a small central domain. Conversion of fibrinogen to fibrin is triggered by thrombin, which cleaves fibrinopeptides A and B from alpha and beta chains, and thus exposes the N-terminal polymerization sites responsible for the formation of the soft clot.

The protein localises to the secreted. In terms of biological role, cleaved by the protease thrombin to yield monomers which, together with fibrinogen alpha (FGA) and fibrinogen gamma (FGG), polymerize to form an insoluble fibrin matrix. Fibrin has a major function in hemostasis as one of the primary components of blood clots. In addition, functions during the early stages of wound repair to stabilize the lesion and guide cell migration during re-epithelialization. Was originally thought to be essential for platelet aggregation, based on in vitro studies using anticoagulated blood. However subsequent studies have shown that it is not absolutely required for thrombus formation in vivo. Enhances expression of SELP in activated platelets. Maternal fibrinogen is essential for successful pregnancy. Fibrin deposition is also associated with infection, where it protects against IFNG-mediated hemorrhage. May also facilitate the antibacterial immune response via both innate and T-cell mediated pathways. In Syncerus caffer (African buffalo), this protein is Fibrinogen beta chain (FGB).